A 449-amino-acid chain; its full sequence is Glutamyl-tRNA reductase (449 aa).

Substrate-binding positions include T58–R61, S121, E126–Q128, and Q132. C59 acts as the Nucleophile in catalysis. NADP(+) is bound at residue G203–A208.

It belongs to the glutamyl-tRNA reductase family. In terms of assembly, homodimer.

The catalysed reaction is (S)-4-amino-5-oxopentanoate + tRNA(Glu) + NADP(+) = L-glutamyl-tRNA(Glu) + NADPH + H(+). The protein operates within porphyrin-containing compound metabolism; protoporphyrin-IX biosynthesis; 5-aminolevulinate from L-glutamyl-tRNA(Glu): step 1/2. In terms of biological role, catalyzes the NADPH-dependent reduction of glutamyl-tRNA(Glu) to glutamate 1-semialdehyde (GSA). In Helicobacter pylori (strain J99 / ATCC 700824) (Campylobacter pylori J99), this protein is Glutamyl-tRNA reductase.